The following is a 445-amino-acid chain: Trigger factor (445 aa).

In terms of domain architecture, PPIase FKBP-type spans 162 to 247; it reads GDQITMDAVG…VKAVHTAEPT (86 aa).

This sequence belongs to the FKBP-type PPIase family. Tig subfamily.

The protein resides in the cytoplasm. The catalysed reaction is [protein]-peptidylproline (omega=180) = [protein]-peptidylproline (omega=0). Involved in protein export. Acts as a chaperone by maintaining the newly synthesized protein in an open conformation. Functions as a peptidyl-prolyl cis-trans isomerase. The chain is Trigger factor from Rickettsia bellii (strain OSU 85-389).